The primary structure comprises 137 residues: Large ribosomal subunit protein uL16 (137 aa).

This sequence belongs to the universal ribosomal protein uL16 family. In terms of assembly, part of the 50S ribosomal subunit.

Functionally, binds 23S rRNA and is also seen to make contacts with the A and possibly P site tRNAs. The polypeptide is Large ribosomal subunit protein uL16 (Streptococcus agalactiae serotype Ia (strain ATCC 27591 / A909 / CDC SS700)).